We begin with the raw amino-acid sequence, 544 residues long: Chaperonin GroEL (544 aa).

Residues 30–33, K51, 87–91, G415, 481–483, and D497 each bind ATP; these read TLGP, DGTTT, and DAL.

This sequence belongs to the chaperonin (HSP60) family. In terms of assembly, forms a cylinder of 14 subunits composed of two heptameric rings stacked back-to-back. Interacts with the co-chaperonin GroES.

Its subcellular location is the cytoplasm. The catalysed reaction is ATP + H2O + a folded polypeptide = ADP + phosphate + an unfolded polypeptide.. Functionally, together with its co-chaperonin GroES, plays an essential role in assisting protein folding. The GroEL-GroES system forms a nano-cage that allows encapsulation of the non-native substrate proteins and provides a physical environment optimized to promote and accelerate protein folding. This is Chaperonin GroEL from Chlamydia trachomatis serovar D (strain ATCC VR-885 / DSM 19411 / UW-3/Cx).